A 125-amino-acid polypeptide reads, in one-letter code: Secreted RxLR effector protein RXLR-C13 (125 aa).

An N-terminal signal peptide occupies residues 1 to 23 (MVNSLTFTLVVVCLVRSCDGVAA). A RxLR-dEER motif is present at residues 43–73 (RVLQETATANDDVKKLSTSTKVDSKLNQEIK). Residue asparagine 85 is glycosylated (N-linked (GlcNAc...) asparagine). Residues 106-123 (FFILATILLFPIAAYMVA) form a helical membrane-spanning segment.

It belongs to the RxLR effector family.

It localises to the secreted. Its subcellular location is the host endoplasmic reticulum membrane. Functionally, secreted effector that does not suppress pattern-triggered immunity (PTI) in plant host. This Plasmopara halstedii (Downy mildew of sunflower) protein is Secreted RxLR effector protein RXLR-C13.